The chain runs to 328 residues: MTATKQHKKVILVGDGAVGSSYAFALVNQGIAQELGIIEIPQLFEKAVGDALDLSHALAFTSPKKIYAAKYEDCADADLVVITAGAPQKPGETRLDLVGKNLAINKSIVTQVIESGFNGIFLVAANPVDILTYATWKFSGFPAEKVIGSGTSLDTARFRQALAEKLDVDARSVHAYIMGEHGDSEFAVWSHANVAGVNLENYLQDVQNFNGEELIDLFEGVRDAAYTIINKKGATFYGIAVALARITKAILDDENAILPLSVFQDGQYGFNEVFIGQPAIVGAHGIVRPVNIPLNDAEKQKMQASAKELKAIIDEAFSKEEFAAAARN.

Residues valine 18, glutamate 39, lysine 46, tyrosine 71, and 85-86 each bind NAD(+); that span reads GA. Substrate-binding residues include glutamine 88 and arginine 94. Residues serine 107, 124-126, and serine 149 each bind NAD(+); that span reads AAN. 126–129 is a substrate binding site; sequence NPVD. Substrate is bound at residue 154 to 157; sequence DTAR. Arginine 159 and histidine 174 together coordinate beta-D-fructose 1,6-bisphosphate. The Proton acceptor role is filled by histidine 181. Tyrosine 226 bears the Phosphotyrosine mark. Threonine 235 contacts substrate.

It belongs to the LDH/MDH superfamily. LDH family. As to quaternary structure, homotetramer.

It is found in the cytoplasm. It catalyses the reaction (S)-lactate + NAD(+) = pyruvate + NADH + H(+). It participates in fermentation; pyruvate fermentation to lactate; (S)-lactate from pyruvate: step 1/1. Allosterically activated by fructose 1,6-bisphosphate (FBP). Catalyzes the conversion of lactate to pyruvate. In Streptococcus mutans serotype c (strain ATCC 700610 / UA159), this protein is L-lactate dehydrogenase.